A 337-amino-acid chain; its full sequence is G-protein coupled receptor 65 (337 aa).

Residues 1 to 5 (MNSTC) lie on the Extracellular side of the membrane. An N-linked (GlcNAc...) asparagine glycan is attached at Asn2. 2 disulfides stabilise this stretch: Cys5/Cys160 and Cys87/Cys170. A helical membrane pass occupies residues 6–42 (IEEQHDLDHYLFPIVYIFVIIVSIPANIGSLCVSFLQ). Residues 43–46 (AKKE) are Cytoplasmic-facing. The chain crosses the membrane as a helical span at residues 47-77 (SELGIYLFSLSLSDLLYALTLPLWIDYTWNK). The Extracellular segment spans residues 78 to 82 (DNWTF). Asn79 carries an N-linked (GlcNAc...) asparagine glycan. The helical transmembrane segment at 83–118 (SPALCKGSAFLMYMNFYSSTAFLTCIAVDRYLAVVY) threads the bilayer. Over 119 to 126 (PLKFFFLR) the chain is Cytoplasmic. Residues 127–153 (TRRFALMVSLSIWILETIFNAVMLWED) traverse the membrane as a helical segment. The Extracellular portion of the chain corresponds to 154-174 (ETVVEYCDAEKSNFTLCYDKY). The segment at 154-174 (ETVVEYCDAEKSNFTLCYDKY) is extracellular loop 2 (ECL2). Asn166 carries an N-linked (GlcNAc...) asparagine glycan. A helical membrane pass occupies residues 175–212 (PLEKWQINLNLFRTCTGYAIPLVTILICNRKVYQAVRH). Residues 213–216 (NKAT) lie on the Cytoplasmic side of the membrane. A helical membrane pass occupies residues 217-252 (ENKEKKRIIKLLVSITVTFVLCFTPFHVMLLIRCIL). At 253–264 (EHAVNFEDHSNS) the chain is on the extracellular side. The helical transmembrane segment at 265 to 293 (GKRTYTMYRITVALTSLNCVADPILYCFV) threads the bilayer. The Cytoplasmic portion of the chain corresponds to 294-337 (TETGRYDMWNILKFCTGRCNTSQRQRKRILSVSTKDTMELEVLE).

The protein belongs to the G-protein coupled receptor 1 family. As to expression, predominantly expressed in thymus, spleen, lymph nodes, small intestine, lung, placenta and peripheral blood leukocytes.

The protein localises to the cell membrane. Its subcellular location is the early endosome membrane. The protein resides in the late endosome membrane. With respect to regulation, activated by a network of residues that connects an extracellular-facing cavity to Glu-142, a conserved charged residue buried in the transmembrane core of the receptor. Protonation likely drives conformational changes in extracellular loop 2 (ECL2), which stabilizes movement of transmembrane 3 (TM3) and a series of rearrangements that connect the extracellular-facing cavity to Glu-142, a residue only conserved in proton-sensing G-protein coupled receptors. Activated by BTB09089, a positive allosteric modulator. In terms of biological role, proton-sensing G-protein coupled receptor activated by extracellular pH, which is required to monitor pH changes and generate adaptive reactions. Activated by an optimal pH of 7.4. Ligand binding causes a conformation change that triggers signaling via guanine nucleotide-binding proteins (G proteins) and modulates the activity of downstream effectors, such as adenylate cyclase. GPR65 is mainly coupled to G(s) G proteins and mediates activation of adenylate cyclase activity. May also act as a receptor for the glycosphingolipid psychosine (PSY) and several related glycosphingolipids. Plays a role in immune response by maintaining lysosome function and regulating T-cell metabolism. Acts as a regulator of inflammation by mediating pH-sensing of extracellular acidification which takes place in inflamed tissues: activation regulates endo-lysosomal function of immune cells and T-cell metabolism. Constitutively active in endosomes and stimulates adenylate cyclase production from endosomes independently from extracellular pH changes. This chain is G-protein coupled receptor 65, found in Homo sapiens (Human).